The primary structure comprises 360 residues: Phosphoserine aminotransferase (360 aa).

Residue R42 coordinates L-glutamate. Pyridoxal 5'-phosphate-binding positions include A76–R77, W102, T152, D172, and Q195. K196 bears the N6-(pyridoxal phosphate)lysine mark. N237–T238 contacts pyridoxal 5'-phosphate.

Belongs to the class-V pyridoxal-phosphate-dependent aminotransferase family. SerC subfamily. In terms of assembly, homodimer. Pyridoxal 5'-phosphate is required as a cofactor.

It is found in the cytoplasm. The enzyme catalyses O-phospho-L-serine + 2-oxoglutarate = 3-phosphooxypyruvate + L-glutamate. It catalyses the reaction 4-(phosphooxy)-L-threonine + 2-oxoglutarate = (R)-3-hydroxy-2-oxo-4-phosphooxybutanoate + L-glutamate. It participates in amino-acid biosynthesis; L-serine biosynthesis; L-serine from 3-phospho-D-glycerate: step 2/3. The protein operates within cofactor biosynthesis; pyridoxine 5'-phosphate biosynthesis; pyridoxine 5'-phosphate from D-erythrose 4-phosphate: step 3/5. Its function is as follows. Catalyzes the reversible conversion of 3-phosphohydroxypyruvate to phosphoserine and of 3-hydroxy-2-oxo-4-phosphonooxybutanoate to phosphohydroxythreonine. This Pasteurella multocida (strain Pm70) protein is Phosphoserine aminotransferase.